Here is a 565-residue protein sequence, read N- to C-terminus: Deoxyribodipyrimidine photo-lyase, mitochondrial (565 aa).

The region spanning 75-226 (STVMHWFRND…QLKYYHDSCI (152 aa)) is the Photolyase/cryptochrome alpha/beta domain. FAD is bound by residues tyrosine 326 and 338-342 (TSGLS). Interaction with DNA regions lie at residues 384–391 (EVAWRDFY) and 451–452 (NR). FAD is bound at residue 482-484 (DGD). Glutamine 514 serves as a coordination point for DNA.

The protein belongs to the DNA photolyase class-1 family. In terms of assembly, monomer. FAD serves as cofactor. It depends on (6R)-5,10-methylene-5,6,7,8-tetrahydrofolate as a cofactor.

It is found in the nucleus. The protein resides in the mitochondrion. The enzyme catalyses cyclobutadipyrimidine (in DNA) = 2 pyrimidine residues (in DNA).. Its function is as follows. Involved in repair of UV radiation-induced DNA damage. Catalyzes the light-dependent monomerization (300-600 nm) of cyclobutyl pyrimidine dimers (in cis-syn configuration), which are formed between adjacent bases on the same DNA strand upon exposure to ultraviolet radiation. The sequence is that of Deoxyribodipyrimidine photo-lyase, mitochondrial (PHR1) from Saccharomyces cerevisiae (strain ATCC 204508 / S288c) (Baker's yeast).